A 343-amino-acid polypeptide reads, in one-letter code: Flavonoid 4'-O-methyltransferase 4 (343 aa).

Residue D211 coordinates S-adenosyl-L-methionine. The Proton acceptor role is filled by H249.

The protein belongs to the class I-like SAM-binding methyltransferase superfamily. Cation-independent O-methyltransferase family. Homodimer.

It catalyses the reaction apigenin + S-adenosyl-L-methionine = acacetin + S-adenosyl-L-homocysteine + H(+). The enzyme catalyses kaempferol + S-adenosyl-L-methionine = kaempferide + S-adenosyl-L-homocysteine + H(+). The catalysed reaction is isorhamnetin + S-adenosyl-L-methionine = 3',4'-O-dimethylquercetin + S-adenosyl-L-homocysteine + 2 H(+). It carries out the reaction scutellarein + S-adenosyl-L-methionine = scutellarein 4'-methyl ether + S-adenosyl-L-homocysteine + H(+). It catalyses the reaction (2S)-naringenin + S-adenosyl-L-methionine = (2S)-naringenin 4'-methyl ether + S-adenosyl-L-homocysteine + H(+). The enzyme catalyses 4',7,8-trihydroxyflavone + S-adenosyl-L-methionine = 7,8-dihydroxy-4'-methoxyflavone + S-adenosyl-L-homocysteine + H(+). The catalysed reaction is taxifolin + S-adenosyl-L-methionine = taxifolin 4'-methyl ether + S-adenosyl-L-homocysteine + H(+). The protein operates within flavonoid metabolism. Its function is as follows. Flavonoid 4'-O-methyltransferase involved in the biosynthesis of polymethoxylated flavonoids natural products such as pebrellin, aroma compounds which contribute to the flavor of peppermint, and exhibit pharmacological activities such as anti-allergic, anti-oxidant, antibacterial, anti-proliferative, and anti-inflammatory effects. Catalyzes S-adenosylmethionine-dependent regioselective 4'-O-methylation of flavonoids; active on various hydroxylated flavonoid substrates, including isorhamnetin, kaempferol, apigenin (API), scutellarein (6-hydroxy-apigenin, 6-OH-API, SCU), taxifolin, 7,8,4'-trihydroxy-flavone and naringenin (NAR), and, with a lower efficiency, quercetin, rhamnetin, luteolin (LUT) and 7,8,3',4'-tetrahydroxy-flavone. This is Flavonoid 4'-O-methyltransferase 4 from Mentha piperita (Peppermint).